The sequence spans 635 residues: Nuclear distribution protein nudE homolog 1 (635 aa).

A coiled-coil region spans residues 14-192; it reads EKEIKHWKSK…TILRDLVTRS (179 aa). 5 disordered regions span residues 35–63, 200–267, 279–328, 389–504, and 516–635; these read ESSL…NKTI, TMAS…LSRD, VLDD…SARA, SRVV…DHDP, and AAQA…TETF. A compositionally biased stretch (basic and acidic residues) spans 43 to 56; the sequence is ESSKELEQEMEKEL. Composition is skewed to polar residues over residues 201–224 and 237–246; these read MASS…SPIK and SRQALSSPVT. Over residues 280 to 299 the composition is skewed to low complexity; sequence LDDSPTATTTSAAPTRSSTL. Polar residues-rich tracts occupy residues 314 to 326 and 411 to 428; these read ASTS…SPSA and GSPS…TSTP. The span at 516 to 541 shows a compositional bias: low complexity; it reads AAQASVAKRRTSMSGSGMSHSASHGS. Polar residues-rich tracts occupy residues 547–571 and 580–619; these read SGST…SSMT and SKRT…PAQT. A compositionally biased stretch (low complexity) spans 620–635; that stretch reads LSRSRSSSLGSETETF.

The protein belongs to the nudE family. Self-associates. Interacts with PAC1.

The protein localises to the cytoplasm. The protein resides in the cytoskeleton. In terms of biological role, required for nuclear migration. This chain is Nuclear distribution protein nudE homolog 1 (NDE1), found in Mycosarcoma maydis (Corn smut fungus).